Consider the following 47-residue polypeptide: Protein DVU_0533 (47 aa).

Residues 18-37 traverse the membrane as a helical segment; that stretch reads WTYILMGVTLLVYVGYWLFL.

Its subcellular location is the cell membrane. Functionally, HMWC (high-molecular-weight cytochrome c), ORF2, ORF3, ORF4, ORF5 and ORF6 in the HMC operon form a transmembrane protein complex that allows electron flow from the periplasmic hydrogenase to the cytoplasmic enzymes that catalyze reduction of sulfates. The chain is Protein DVU_0533 from Nitratidesulfovibrio vulgaris (strain ATCC 29579 / DSM 644 / CCUG 34227 / NCIMB 8303 / VKM B-1760 / Hildenborough) (Desulfovibrio vulgaris).